The primary structure comprises 535 residues: Unconventional prefoldin RPB5 interactor 1 (535 aa).

Methionine 1 is subject to N-acetylmethionine. Disordered stretches follow at residues 1–23 (MEAPTVETPPDPSPPSAPAPALV), 223–330 (LLGE…VGDN), 352–383 (KNTTLKFSEKKEEAKRKRKNSTGSGHSAQELP), and 412–431 (SRSRENSVCSDTSESSAAEF). A compositionally biased stretch (pro residues) spans 7–18 (ETPPDPSPPSAP). Composition is skewed to polar residues over residues 253–265 (TNVNAMHQVTDSH) and 276–296 (EPFSGQVNSQLNCSVNGSSSY). Residues 299–320 (DDDDDDDDDDDDDNIDDDDGDN) show a composition bias toward acidic residues. Phosphoserine; by RPS6KB1 is present on serine 372. Threonine 373 bears the Phosphothreonine mark. The span at 417-427 (NSVCSDTSESS) shows a compositional bias: polar residues. Residue serine 442 is modified to Phosphoserine.

It belongs to the RNA polymerase II subunit 5-mediating protein family. In terms of assembly, homodimer. Component of the PAQosome complex which is responsible for the biogenesis of several protein complexes and which consists of R2TP complex members RUVBL1, RUVBL2, RPAP3 and PIH1D1, URI complex members PFDN2, PFDN6, PDRG1, UXT and URI1 as well as ASDURF, POLR2E and DNAAF10/WDR92. Interacts with POLR2E/RPB5, RUVBL2 and RUVBL1. Interacts with PFDN2, PFDN4 and STAP1; the interactions are phosphorylation-dependent and occur in a growth-dependent manner in the mitochondrion. Interacts with UXT. Interacts with PPP1CC; the interaction is phosphorylation-dependent and occurs in a growth factor-dependent manner. Interacts (via the middle C-terminal region) with GTF2F1 and GTF2F2. Interacts with DMAP1. Interacts with TSC1 and TSC2. Interacts with PRPF8 and EFTUD2 in a ZNHIT2-dependent manner. In terms of processing, phosphorylated. Phosphorylation occurs essentially on serine residues. Phosphorylation occurs in response to androgen treatment in prostate cancer cells in a mTOR-dependent manner. Phosphorylated; hyperhosphorylated in mitochondria in a mTORC-dependent signaling pathway. Phosphorylated at Ser-372 by RPS6KB1 in a growth factor- and rapamycin-dependent manner. S6K1-mediated mitochondrial phosphorylation at Ser-372 disrupts the URI1-PPP1CC complex in the mitochondrion, relieves PPP1CC phosphatase inhibition activity and hence engages a negative feedback diminishing RPS6KB1 kinase activity, preventing sustained S6K1-dependent signaling. In terms of tissue distribution, ubiquitous. Expressed in ovarian cancers (at protein level). Expressed strongly in skeletal muscle. Expressed weakly in brain, heart, pancreas and in prostate epithelial cells.

The protein resides in the nucleus. The protein localises to the cytoplasm. It is found in the mitochondrion. Its subcellular location is the cell projection. It localises to the dendrite. Involved in gene transcription regulation. Acts as a transcriptional repressor in concert with the corepressor UXT to regulate androgen receptor (AR) transcription. May act as a tumor suppressor to repress AR-mediated gene transcription and to inhibit anchorage-independent growth in prostate cancer cells. Required for cell survival in ovarian cancer cells. Together with UXT, associates with chromatin to the NKX3-1 promoter region. Antagonizes transcriptional modulation via hepatitis B virus X protein. In terms of biological role, plays a central role in maintaining S6K1 signaling and BAD phosphorylation under normal growth conditions thereby protecting cells from potential deleterious effects of sustained S6K1 signaling. The URI1-PPP1CC complex acts as a central component of a negative feedback mechanism that counteracts excessive S6K1 survival signaling to BAD in response to growth factors. Mediates inhibition of PPP1CC phosphatase activity in mitochondria. Coordinates the regulation of nutrient-sensitive gene expression availability in a mTOR-dependent manner. Seems to be a scaffolding protein able to assemble a prefoldin-like complex that contains PFDs and proteins with roles in transcription and ubiquitination. This is Unconventional prefoldin RPB5 interactor 1 (URI1) from Homo sapiens (Human).